The following is a 545-amino-acid chain: Labda-7,13-dienyl diphosphate synthase (545 aa).

The DXDDTA motif motif lies at aspartate 315–alanine 320. Positions arginine 444–tryptophan 450 match the RXXDGSW motif motif. The segment at leucine 526–aspartate 545 is disordered.

It belongs to the terpene synthase family. The cofactor is Mg(2+).

The catalysed reaction is (2E,6E,10E)-geranylgeranyl diphosphate = (13E)-labda-7,13-dien-15-yl diphosphate. Involved in the biosynthesis of the labdane-type bicyclic diterpene labda-7,13(16),14-triene. Catalyzes the conversion of geranylgeranyl diphosphate (GGDP) into labda-7,13(E)-dienyl diphosphate. This is Labda-7,13-dienyl diphosphate synthase from Streptomyces clavuligerus.